Reading from the N-terminus, the 229-residue chain is Cytidylate kinase (229 aa).

10–18 (GFSSCGKST) provides a ligand contact to ATP.

The protein belongs to the cytidylate kinase family. Type 1 subfamily.

It is found in the cytoplasm. It carries out the reaction CMP + ATP = CDP + ADP. It catalyses the reaction dCMP + ATP = dCDP + ADP. The chain is Cytidylate kinase from Bacteroides fragilis (strain ATCC 25285 / DSM 2151 / CCUG 4856 / JCM 11019 / LMG 10263 / NCTC 9343 / Onslow / VPI 2553 / EN-2).